A 482-amino-acid chain; its full sequence is MKFIVKPHPEVFVKSDSVRKRFIRILESNLRSIIQRETKGVEVINRRDHIEVTGLSDEYRDVTLSVLTQTPGIHHVLEVKQSGFKDMHDIFEQCLEMNREVIEGKTFCVRVKRRGNHDFTSIELERYVGGGLNQSVESASVRLKNPEVTVKFEVANDKLNLIIARHKGLGGFPLGTQEDVLSLISGGFDSGVSSYLHIKRGSKVHYLFFNLGGPAHEIGVKQVSHFLWKKYGSSAKVKFISVDFDPVVAEILEKVDDGQMGVILKRMFMRAGGMVAEKFGIEGLVTGEALGQVSSQTLTNLRHIDNVTDSLILRPLINWDKEDIIDLAREIGTEDFAKTMPEYCGVISKKPTVKAVKEKLEKEEAKFDFSVLEQAVYNARVMDIRDIEKESQEQAPEVEMVSELGSDVVVLDIRSAEEEDEKPLELDGVEVTHIPFFKLATKFGDLDQSKEYLLYCERGVMSRLQALLLIENGYKNVKVYRP.

Positions 61 to 165 (DVTLSVLTQT…NDKLNLIIAR (105 aa)) constitute a THUMP domain. Residues 183–184 (LI), lysine 265, glycine 287, and glutamine 296 each bind ATP. Cysteine 344 and cysteine 456 are joined by a disulfide. The 79-residue stretch at 404-482 (LGSDVVVLDI…GYKNVKVYRP (79 aa)) folds into the Rhodanese domain. The active-site Cysteine persulfide intermediate is cysteine 456.

Belongs to the ThiI family.

It is found in the cytoplasm. It carries out the reaction [ThiI sulfur-carrier protein]-S-sulfanyl-L-cysteine + a uridine in tRNA + 2 reduced [2Fe-2S]-[ferredoxin] + ATP + H(+) = [ThiI sulfur-carrier protein]-L-cysteine + a 4-thiouridine in tRNA + 2 oxidized [2Fe-2S]-[ferredoxin] + AMP + diphosphate. The enzyme catalyses [ThiS sulfur-carrier protein]-C-terminal Gly-Gly-AMP + S-sulfanyl-L-cysteinyl-[cysteine desulfurase] + AH2 = [ThiS sulfur-carrier protein]-C-terminal-Gly-aminoethanethioate + L-cysteinyl-[cysteine desulfurase] + A + AMP + 2 H(+). It participates in cofactor biosynthesis; thiamine diphosphate biosynthesis. Its function is as follows. Catalyzes the ATP-dependent transfer of a sulfur to tRNA to produce 4-thiouridine in position 8 of tRNAs, which functions as a near-UV photosensor. Also catalyzes the transfer of sulfur to the sulfur carrier protein ThiS, forming ThiS-thiocarboxylate. This is a step in the synthesis of thiazole, in the thiamine biosynthesis pathway. The sulfur is donated as persulfide by IscS. The protein is tRNA sulfurtransferase of Aliivibrio fischeri (strain MJ11) (Vibrio fischeri).